The sequence spans 296 residues: Light-inducible protein CPRF3 (296 aa).

Disordered regions lie at residues 1 to 27 (MSDG…ITTT), 98 to 165 (PNLA…GSLE), and 190 to 223 (RVND…KSDE). The segment covering 107–117 (VGRKISDEKGR) has biased composition (basic and acidic residues). Low complexity predominate over residues 145–156 (SSSDNDCPSLSS). Residues 196 to 259 (ELKRQRRKQS…AEVTSENHSI (64 aa)) enclose the bZIP domain. Residues 198–220 (KRQRRKQSNRESARRSRLRKQAK) form a basic motif region. The interval 224 to 245 (LQERLDNLSKENRILRKNLQRI) is leucine-zipper.

It belongs to the bZIP family. Binds DNA as a dimer.

It is found in the nucleus. Binds to the G-box-like motif (5'-ACGTGGC-3') of the chalcone synthase (CHS) gene promoter. G-box and G-box-like motifs are defined in promoters of certain plant genes which are regulated by such diverse stimuli as light-induction or hormone control. This is Light-inducible protein CPRF3 (CPRF3) from Petroselinum crispum (Parsley).